A 436-amino-acid polypeptide reads, in one-letter code: Adenylosuccinate synthetase (436 aa).

GTP-binding positions include 12–18 and 40–42; these read GDEGKGK and GHT. Catalysis depends on Asp13, which acts as the Proton acceptor. 2 residues coordinate Mg(2+): Asp13 and Gly40. Residues 13–16, 38–41, Thr128, Arg142, Gln223, Thr238, and Arg302 each bind IMP; these read DEGK and NAGH. Catalysis depends on His41, which acts as the Proton donor. 298-304 is a binding site for substrate; that stretch reads TTTGRRR. Residues Arg304, 330 to 332, and 412 to 414 contribute to the GTP site; these read KLD and SLG.

Belongs to the adenylosuccinate synthetase family. As to quaternary structure, homodimer. It depends on Mg(2+) as a cofactor.

It is found in the cytoplasm. It catalyses the reaction IMP + L-aspartate + GTP = N(6)-(1,2-dicarboxyethyl)-AMP + GDP + phosphate + 2 H(+). The protein operates within purine metabolism; AMP biosynthesis via de novo pathway; AMP from IMP: step 1/2. Functionally, plays an important role in the de novo pathway of purine nucleotide biosynthesis. Catalyzes the first committed step in the biosynthesis of AMP from IMP. The polypeptide is Adenylosuccinate synthetase (Prochlorococcus marinus subsp. pastoris (strain CCMP1986 / NIES-2087 / MED4)).